The chain runs to 920 residues: Phosphoenolpyruvate carboxylase (920 aa).

Residues histidine 138 and lysine 583 contribute to the active site.

The protein belongs to the PEPCase type 1 family. The cofactor is Mg(2+).

It catalyses the reaction oxaloacetate + phosphate = phosphoenolpyruvate + hydrogencarbonate. Its function is as follows. Forms oxaloacetate, a four-carbon dicarboxylic acid source for the tricarboxylic acid cycle. This chain is Phosphoenolpyruvate carboxylase, found in Streptococcus pyogenes serotype M3 (strain ATCC BAA-595 / MGAS315).